A 305-amino-acid polypeptide reads, in one-letter code: Tyrosine recombinase XerC (305 aa).

One can recognise a Core-binding (CB) domain in the interval 4 to 95 (TSIQALINKW…AVKNFYRFLE (92 aa)). The Tyr recombinase domain maps to 116-298 (LLPKALSEDD…SIKHLEAVYT (183 aa)). Catalysis depends on residues arginine 159, lysine 182, histidine 250, arginine 253, and histidine 276. Residue tyrosine 285 is the O-(3'-phospho-DNA)-tyrosine intermediate of the active site.

This sequence belongs to the 'phage' integrase family. XerC subfamily. As to quaternary structure, forms a cyclic heterotetrameric complex composed of two molecules of XerC and two molecules of XerD.

It localises to the cytoplasm. Its function is as follows. Site-specific tyrosine recombinase, which acts by catalyzing the cutting and rejoining of the recombining DNA molecules. The XerC-XerD complex is essential to convert dimers of the bacterial chromosome into monomers to permit their segregation at cell division. It also contributes to the segregational stability of plasmids. The sequence is that of Tyrosine recombinase XerC from Rickettsia peacockii (strain Rustic).